The following is a 406-amino-acid chain: Terminal uridylyltransferase 7 (406 aa).

The N-terminal 15 residues, 1–15 (MNVAKREFIRGMMAH), are a transit peptide targeting the mitochondrion. UTP-binding positions include S54 and 64–65 (SD). Mg(2+) contacts are provided by D65 and D67. UTP is bound by residues 138–142 (GVENS), K164, K168, and 181–183 (NSF).

It belongs to the DNA polymerase type-B-like family. In terms of assembly, component of the mitochondrial RNA editing core complex-like (RECC-like), also known as the editosome-like complex; only a small proportion of MEAT1 associates with the complex. Interacts with RNA-editing ligase REL1. Mg(2+) is required as a cofactor.

It localises to the mitochondrion matrix. The enzyme catalyses RNA(n) + UTP = RNA(n)-3'-uridine ribonucleotide + diphosphate. Functionally, terminal uridylyltransferase which, as part of the mitochondrial RNA editing core-like complex (RECC-like), is involved in the post-transcriptional editing of mitochondrial RNA, a process involving the addition and deletion of uridine (U) nucleotides in the pre-mRNA. Specifically, catalyzes the addition of U to single-stranded RNA with a preference for a 3'-terminal U and adds the number of Us specified by a guide RNA (gRNA) to precleaved double-stranded RNA editing substrates. Essential for insect and bloodstream developmental forms viability. The polypeptide is Terminal uridylyltransferase 7 (Trypanosoma brucei brucei).